Consider the following 236-residue polypeptide: Phosphoribosylaminoimidazole-succinocarboxamide synthase (236 aa).

Belongs to the SAICAR synthetase family.

It catalyses the reaction 5-amino-1-(5-phospho-D-ribosyl)imidazole-4-carboxylate + L-aspartate + ATP = (2S)-2-[5-amino-1-(5-phospho-beta-D-ribosyl)imidazole-4-carboxamido]succinate + ADP + phosphate + 2 H(+). Its pathway is purine metabolism; IMP biosynthesis via de novo pathway; 5-amino-1-(5-phospho-D-ribosyl)imidazole-4-carboxamide from 5-amino-1-(5-phospho-D-ribosyl)imidazole-4-carboxylate: step 1/2. This chain is Phosphoribosylaminoimidazole-succinocarboxamide synthase, found in Rickettsia massiliae (strain Mtu5).